The primary structure comprises 63 residues: Large ribosomal subunit protein uL30 (63 aa).

The protein belongs to the universal ribosomal protein uL30 family. Part of the 50S ribosomal subunit.

This chain is Large ribosomal subunit protein uL30, found in Rickettsia typhi (strain ATCC VR-144 / Wilmington).